A 435-amino-acid chain; its full sequence is Hyaluronidase-1 (435 aa).

The first 21 residues, 1-21, serve as a signal peptide directing secretion; the sequence is MAAHLLPICTLFLNLLSVAQG. 2 disulfides stabilise this stretch: C43/C333 and C207/C221. Residues N70, N99, N107, and N121 are each glycosylated (N-linked (GlcNAc...) asparagine). Residue E131 is the Proton donor of the active site. N-linked (GlcNAc...) asparagine glycans are attached at residues N216, N256, and N350. 3 cysteine pairs are disulfide-bonded: C358–C369, C363–C418, and C420–C429. The EGF-like domain occupies 418–429; it reads CRCYPGWRGTWC.

Belongs to the glycosyl hydrolase 56 family. In terms of tissue distribution, highly expressed in spleen, kidney, and lung.

It is found in the secreted. The protein localises to the lysosome. It carries out the reaction Random hydrolysis of (1-&gt;4)-linkages between N-acetyl-beta-D-glucosamine and D-glucuronate residues in hyaluronate.. In terms of biological role, may have a role in promoting tumor progression. May block the TGFB1-enhanced cell growth. The polypeptide is Hyaluronidase-1 (HYAL1) (Sus scrofa (Pig)).